Consider the following 993-residue polypeptide: DNA-binding protein SMUBP-2 (993 aa).

An N-acetylalanine modification is found at Ala-2. Residues 214–221 (GPPGTGKT), Gln-403, Tyr-442, and Glu-571 contribute to the ATP site. The tract at residues 638 to 785 (TAFEYLDDIV…KRRFITVSKR (148 aa)) is SS DNA-binding. Disordered regions lie at residues 651–723 (YSHE…VESQ), 782–828 (VSKR…PDQP), and 841–879 (VRSA…DLPT). 2 stretches are compositionally biased toward polar residues: residues 653-662 (HENSQGSSHA) and 669-681 (PATS…QRQE). The R3H domain occupies 723–786 (QDGVDHFRAM…RRFITVSKRA (64 aa)). Basic and acidic residues predominate over residues 818–828 (PPREQRGPDQP). Over residues 842–859 (RSAQGQPASKEQQASGQQ) the composition is skewed to polar residues. The Nuclear localization signal signature appears at 864–868 (KKKKK). The AN1-type zinc finger occupies 891–940 (VKADNTCGFAKCTAGVTTLGQFCQLCSRRYCLSHHLPEIHGCGERARAHA). The Zn(2+) site is built by Cys-897, Cys-902, Cys-913, Cys-916, Cys-921, His-924, His-930, and Cys-932. Residues 971–993 (RRLDKKLSELSNQRTSRRKERGT) are disordered.

The protein belongs to the DNA2/NAM7 helicase family. As to quaternary structure, homooligomer. Interacts with RUVBL1. Interacts with RUVBL2. Interacts with GTF3C1. Interacts with ABT1. Interacts with ribosomes. As to expression, expressed in all tissues examined. Expressed in the developing and adult human brain, with highest expression in the cerebellum. Moderately expressed in fibroblasts.

The protein localises to the nucleus. The protein resides in the cytoplasm. It localises to the cell projection. It is found in the axon. The catalysed reaction is ATP + H2O = ADP + phosphate + H(+). 5' to 3' helicase that unwinds RNA and DNA duplexes in an ATP-dependent reaction. Specific to 5'-phosphorylated single-stranded guanine-rich sequences. May play a role in RNA metabolism, ribosome biogenesis or initiation of translation. May play a role in regulation of transcription. Interacts with tRNA-Tyr. The polypeptide is DNA-binding protein SMUBP-2 (IGHMBP2) (Homo sapiens (Human)).